The chain runs to 510 residues: Aspartate kinase FUB3 (510 aa).

2 ACT domains span residues 372 to 440 and 446 to 510; these read ILSN…VLPD and LVGA…KNAM.

Belongs to the aspartokinase family.

It catalyses the reaction L-aspartate + ATP = 4-phospho-L-aspartate + ADP. The protein operates within mycotoxin biosynthesis. Its function is as follows. Aspartate kinase; part of the gene cluster that mediates the biosynthesis of fusaric acid, a mycotoxin with low to moderate toxicity to animals and humans, but with high phytotoxic properties. L-aspartate is suggested as fusaric acid amino acid precursor that is activated and further processed to O-acetyl-L-homoserine by cluster enzymes aspartate kinase FUB3 and homoserine O-acetyltransferase FUB5, as well as enzymes of the primary metabolism. The polyketide synthase (PKS) FUB1 generates the triketide trans-2-hexenal which is presumptively released by the hydrolase FUB4 and linked to the NRPS-bound amino acid precursor by NAD(P)-dependent dehydrogenase FUB6. FUB1, FUB4, and the non-canonical NRPS Fub8 may form an enzyme complex. Further processing of the NRPS-bound intermediate might be carried out by FUB6 and the sulfhydrylase FUB7, enabling a spontaneous electrocyclization to close the carbon backbone of fusaric acid. Dihydrofusaric acid is likely to be released via reduction by the thioester reductase (TR) domain of FUB8 whereupon the final oxidation to fusaric acid may (also) be performed by the FMN-dependent dehydrogenase FUB9. The protein is Aspartate kinase FUB3 of Gibberella moniliformis (strain M3125 / FGSC 7600) (Maize ear and stalk rot fungus).